Reading from the N-terminus, the 257-residue chain is Phosphonates import ATP-binding protein PhnC 1 (257 aa).

One can recognise an ABC transporter domain in the interval 2 to 246; the sequence is IELKNVSKVY…VFKDIYGRPL (245 aa). Residue 35-42 coordinates ATP; sequence GLSGAGKS.

This sequence belongs to the ABC transporter superfamily. Phosphonates importer (TC 3.A.1.9.1) family. In terms of assembly, the complex is composed of two ATP-binding proteins (PhnC), two transmembrane proteins (PhnE) and a solute-binding protein (PhnD).

The protein localises to the cell membrane. It carries out the reaction phosphonate(out) + ATP + H2O = phosphonate(in) + ADP + phosphate + H(+). Its function is as follows. Part of the ABC transporter complex PhnCDE involved in phosphonates import. Responsible for energy coupling to the transport system. This is Phosphonates import ATP-binding protein PhnC 1 from Halalkalibacterium halodurans (strain ATCC BAA-125 / DSM 18197 / FERM 7344 / JCM 9153 / C-125) (Bacillus halodurans).